Reading from the N-terminus, the 49-residue chain is Protein 19.5 (49 aa).

The N-terminal stretch at 1-23 is a signal peptide; that stretch reads MFRLLLNLLRHRVTYRFLVVLCA.

The chain is Protein 19.5 from Escherichia phage T7 (Bacteriophage T7).